Consider the following 632-residue polypeptide: 1-deoxy-D-xylulose-5-phosphate synthase (632 aa).

Residues His-79 and 120-122 (GHA) each bind thiamine diphosphate. Position 152 (Asp-152) interacts with Mg(2+). Thiamine diphosphate contacts are provided by residues 153–154 (GA), Asn-181, Phe-293, and Glu-377. Asn-181 provides a ligand contact to Mg(2+).

Belongs to the transketolase family. DXPS subfamily. As to quaternary structure, homodimer. It depends on Mg(2+) as a cofactor. Thiamine diphosphate serves as cofactor.

It carries out the reaction D-glyceraldehyde 3-phosphate + pyruvate + H(+) = 1-deoxy-D-xylulose 5-phosphate + CO2. It functions in the pathway metabolic intermediate biosynthesis; 1-deoxy-D-xylulose 5-phosphate biosynthesis; 1-deoxy-D-xylulose 5-phosphate from D-glyceraldehyde 3-phosphate and pyruvate: step 1/1. Catalyzes the acyloin condensation reaction between C atoms 2 and 3 of pyruvate and glyceraldehyde 3-phosphate to yield 1-deoxy-D-xylulose-5-phosphate (DXP). The polypeptide is 1-deoxy-D-xylulose-5-phosphate synthase (Parabacteroides distasonis (strain ATCC 8503 / DSM 20701 / CIP 104284 / JCM 5825 / NCTC 11152)).